The chain runs to 975 residues: C-1-tetrahydrofolate synthase, mitochondrial (975 aa).

The N-terminal 34 residues, 1–34 (MLSRLSLLSNSRAFQQARWRIYRLKVSPTVHASQ), are a transit peptide targeting the mitochondrion. Residues 35 to 343 (YHILSGRKLA…KPLPLHLESP (309 aa)) are methylenetetrahydrofolate dehydrogenase and cyclohydrolase. Substrate contacts are provided by residues 83–87 (YVRMK) and 130–132 (IQL). Residues 201 to 203 (GRS) and serine 226 contribute to the NADP(+) site. 301-305 (PGGVG) contributes to the substrate binding site. The tract at residues 344–975 (VPSDIDISRA…DDDGEIEGLF (632 aa)) is formyltetrahydrofolate synthetase. 408-415 (TPLGEGKS) serves as a coordination point for ATP.

The protein in the N-terminal section; belongs to the tetrahydrofolate dehydrogenase/cyclohydrolase family. It in the C-terminal section; belongs to the formate--tetrahydrofolate ligase family. Homodimer.

It is found in the mitochondrion. The catalysed reaction is (6R)-5,10-methylene-5,6,7,8-tetrahydrofolate + NADP(+) = (6R)-5,10-methenyltetrahydrofolate + NADPH. The enzyme catalyses (6R)-5,10-methenyltetrahydrofolate + H2O = (6R)-10-formyltetrahydrofolate + H(+). It catalyses the reaction (6S)-5,6,7,8-tetrahydrofolate + formate + ATP = (6R)-10-formyltetrahydrofolate + ADP + phosphate. Its pathway is one-carbon metabolism; tetrahydrofolate interconversion. In terms of biological role, mitochondrial isozyme of C-1-tetrahydrofolate synthase. The trifunctional enzyme catalyzes the interconversion of the one-carbon derivatives of tetrahydrofolate (THF) between different oxidation states by the enzymatic activities 10-formyltetrahydrofolate synthetase, 5,lO-methenyltetrahydrofolate cyclohydrolase, and 5,lO-methylenetetrahydrofolate dehydrogenase. The protein is C-1-tetrahydrofolate synthase, mitochondrial of Saccharomyces cerevisiae (strain ATCC 204508 / S288c) (Baker's yeast).